Reading from the N-terminus, the 562-residue chain is Protein wntless (562 aa).

The Cytoplasmic segment spans residues 1–13; that stretch reads MSGTILENLSGRK. The helical transmembrane segment at 14–34 threads the bilayer; sequence LSILVTTLLLCQVLCFLLGGL. The Lumenal portion of the chain corresponds to 35–239; that stretch reads YAPLPAGHVT…AIHQNGGFTQ (205 aa). Asn-58 carries an N-linked (GlcNAc...) asparagine glycan. A helical transmembrane segment spans residues 240–260; the sequence is IWLLLKTVLFPFVVGIMIWFW. At 261-270 the chain is on the cytoplasmic side; the sequence is RRVHLLQRSP. Residues 271-291 traverse the membrane as a helical segment; the sequence is ALLEYMLIYLGAALTFLNLPL. At 292-311 the chain is on the lumenal side; it reads EYLSLVFEMPYMLLLSDIRQ. Residues 312 to 332 form a helical membrane-spanning segment; the sequence is GIFYAMLLTFWLVFAGEHMLI. At 333–344 the chain is on the cytoplasmic side; sequence QDAPNKSTIRSR. Residues 345 to 365 traverse the membrane as a helical segment; sequence YWKHLSAVVVGCISLFVFDIC. Topologically, residues 366-390 are lumenal; the sequence is ERGVQLRNPFYSIWAMPLAAKMAMT. The chain crosses the membrane as a helical span at residues 391 to 411; it reads FIVLAGVSAAIYFLFLCYMIW. Residues 412-441 are Cytoplasmic-facing; it reads KVFRNIGDKRTSLPSMSQARRLHYESLIYR. Residues 442–462 traverse the membrane as a helical segment; that stretch reads FKFLMLATIVCAALTVTGFIM. Residues 463–482 lie on the Lumenal side of the membrane; it reads GQRAEGQWDWNDNVAIQPTS. Residues 483 to 503 form a helical membrane-spanning segment; the sequence is AFLTGVYGMWNIYIFALLILY. Over 504 to 562 the chain is Cytoplasmic; sequence APSHKQWPTMHHSDETTQSNENIVASAASEEIEFSHLPSDSNPSEISSLTSFTRKVAFD. Residues 539–562 form a disordered region; that stretch reads HLPSDSNPSEISSLTSFTRKVAFD. Residues 541–556 are compositionally biased toward polar residues; it reads PSDSNPSEISSLTSFT.

Belongs to the wntless family. In terms of assembly, interacts with wg; in the Golgi. Interacts with Vps35, a component of the retromer complex; wls stability is regulated by Vps35.

The protein resides in the presynaptic cell membrane. Its subcellular location is the postsynaptic cell membrane. It localises to the cell membrane. The protein localises to the endoplasmic reticulum membrane. It is found in the endosome membrane. The protein resides in the golgi apparatus membrane. In terms of biological role, a segment polarity gene required for wingless (wg)-dependent patterning processes, acting in both wg-sending cells and wg-target cells. In non-neuronal cells wls directs wg secretion. The wls traffic loop encompasses the Golgi, the cell surface, an endocytic compartment and a retrograde route leading back to the Golgi, and involves clathrin-mediated endocytosis and the retromer complex (a conserved protein complex consisting of Vps35 and Vps26). In neuronal cells (the larval motorneuron NMJ), the wg signal moves across the synapse via the release of wls-containing exosome-like vesicles. Postsynaptic wls is required for the trafficking of fz2 through the fz2-interacting protein Grip. The polypeptide is Protein wntless (Drosophila erecta (Fruit fly)).